A 34-amino-acid polypeptide reads, in one-letter code: Mytilin-B (34 aa).

Intrachain disulfides connect cysteine 2–cysteine 27, cysteine 6–cysteine 29, cysteine 10–cysteine 31, and cysteine 15–cysteine 34.

Its subcellular location is the secreted. Its function is as follows. Has antibacterial and antiviral activity. The sequence is that of Mytilin-B from Mytilus edulis (Blue mussel).